Here is a 233-residue protein sequence, read N- to C-terminus: Orotidine 5'-phosphate decarboxylase (233 aa).

Substrate contacts are provided by residues D12, K34, 61 to 70 (DLKFHDIPNT), T120, R181, Q190, G210, and R211. K63 (proton donor) is an active-site residue.

The protein belongs to the OMP decarboxylase family. Type 1 subfamily. In terms of assembly, homodimer.

It carries out the reaction orotidine 5'-phosphate + H(+) = UMP + CO2. Its pathway is pyrimidine metabolism; UMP biosynthesis via de novo pathway; UMP from orotate: step 2/2. Catalyzes the decarboxylation of orotidine 5'-monophosphate (OMP) to uridine 5'-monophosphate (UMP). The chain is Orotidine 5'-phosphate decarboxylase from Hahella chejuensis (strain KCTC 2396).